The sequence spans 166 residues: Anaerobic nitrite reductase NSHB1 (166 aa).

One can recognise a Globin domain in the interval 13-163; that stretch reads SFSEEQEALV…LVAAIKQEMK (151 aa). The Homodimerization signature appears at 46 to 50; that stretch reads EVAPS. Serine 56, lysine 70, histidine 74, arginine 104, threonine 108, and histidine 109 together coordinate heme b. The Homodimerization signature appears at 116 to 128; it reads DAHFEVVKFALLD.

The protein belongs to the plant globin family. In terms of assembly, homodimer. Requires heme b as cofactor. Expressed in coleoptiles, embryos, leaves, seminal roots and roots.

It is found in the cytoplasm. It localises to the nucleus. It catalyses the reaction Fe(III)-heme b-[protein] + nitric oxide + H2O = Fe(II)-heme b-[protein] + nitrite + 2 H(+). Its activity is regulated as follows. Slowly reduced by ascorbic acid (AA); this reaction may become a source of nitric oxide (NO) during hypoxia. Phytoglobin that reduces nitrite to nitric oxide under anoxic conditions (e.g. during flooding or in waterlogged soil). May not function as an oxygen storage or transport protein. Has an unusually high affinity for O(2) through a hexacoordinate heme iron because of a very low dissociation constant. In Oryza sativa subsp. japonica (Rice), this protein is Anaerobic nitrite reductase NSHB1.